Reading from the N-terminus, the 62-residue chain is Potassium channel toxin alpha-KTx Tx773 (62 aa).

Positions 1 to 18 (MQKLFIVLLLFCILRLDA) are cleaved as a signal peptide. 3 disulfides stabilise this stretch: Cys-28–Cys-46, Cys-33–Cys-59, and Cys-37–Cys-61.

This sequence belongs to the short scorpion toxin superfamily. Potassium channel inhibitor family. Alpha-KTx 23 subfamily. As to expression, expressed by the venom gland.

The protein resides in the secreted. May block potassium channels. This Buthus israelis (Israeli scorpion) protein is Potassium channel toxin alpha-KTx Tx773.